The following is a 253-amino-acid chain: uncharacterized protein (253 aa).

This is an uncharacterized protein from Bacillus subtilis (strain 168).